The primary structure comprises 445 residues: Mitochondrial enolase superfamily member 1 (445 aa).

Substrate-binding positions include 24 to 26 (GSD), Tyr-34, and Lys-220. The Proton donor/acceptor role is filled by Lys-222. Asp-250 serves as a coordination point for Mg(2+). Residues Asn-252, Glu-276, Glu-305, 355–357 (HAG), and Glu-386 each bind substrate. Residues Glu-276 and Glu-305 each coordinate Mg(2+). Residue His-355 is part of the active site.

The protein belongs to the mandelate racemase/muconate lactonizing enzyme family. ENOSF1 subfamily. Requires Mg(2+) as cofactor.

The protein localises to the mitochondrion. The catalysed reaction is L-fuconate = 2-dehydro-3-deoxy-L-fuconate + H2O. Plays a role in the catabolism of L-fucose, a sugar that is part of the carbohydrates that are attached to cellular glycoproteins. Catalyzes the dehydration of L-fuconate to 2-keto-3-deoxy-L-fuconate by the abstraction of the 2-proton to generate an enediolate intermediate that is stabilized by the magnesium ion. May down-regulate thymidylate synthase activity, possibly already at the RNA level, by promoting the degradation of TYMS mRNA via an antisense RNA-based mechanism. The chain is Mitochondrial enolase superfamily member 1 (enosf1) from Xenopus laevis (African clawed frog).